Reading from the N-terminus, the 131-residue chain is Small ribosomal subunit protein bS6 (131 aa).

Positions Glu98–Glu131 are disordered. The span at Lys104–Phe116 shows a compositional bias: basic and acidic residues. The span at Thr120 to Glu131 shows a compositional bias: acidic residues.

This sequence belongs to the bacterial ribosomal protein bS6 family.

Binds together with bS18 to 16S ribosomal RNA. The chain is Small ribosomal subunit protein bS6 from Citrobacter koseri (strain ATCC BAA-895 / CDC 4225-83 / SGSC4696).